We begin with the raw amino-acid sequence, 204 residues long: Urease accessory protein UreG (204 aa).

Position 15 to 22 (15 to 22 (GPVGSGKT)) interacts with GTP.

This sequence belongs to the SIMIBI class G3E GTPase family. UreG subfamily. Homodimer. UreD, UreF and UreG form a complex that acts as a GTP-hydrolysis-dependent molecular chaperone, activating the urease apoprotein by helping to assemble the nickel containing metallocenter of UreC. The UreE protein probably delivers the nickel.

The protein localises to the cytoplasm. In terms of biological role, facilitates the functional incorporation of the urease nickel metallocenter. This process requires GTP hydrolysis, probably effectuated by UreG. The protein is Urease accessory protein UreG of Methylobacterium nodulans (strain LMG 21967 / CNCM I-2342 / ORS 2060).